A 461-amino-acid polypeptide reads, in one-letter code: Ribulose bisphosphate carboxylase (461 aa).

N112 contributes to the substrate binding site. K167 serves as the catalytic Proton acceptor. Residue K169 participates in substrate binding. Mg(2+)-binding residues include K192, D194, and E195. K192 carries the N6-carboxylysine modification. The active-site Proton acceptor is the H288. Positions 289, 322, and 369 each coordinate substrate.

It belongs to the RuBisCO large chain family. Type II subfamily. In terms of assembly, homodimer. Mg(2+) serves as cofactor.

The enzyme catalyses 2 (2R)-3-phosphoglycerate + 2 H(+) = D-ribulose 1,5-bisphosphate + CO2 + H2O. The catalysed reaction is D-ribulose 1,5-bisphosphate + O2 = 2-phosphoglycolate + (2R)-3-phosphoglycerate + 2 H(+). RuBisCO catalyzes two reactions: the carboxylation of D-ribulose 1,5-bisphosphate, the primary event in carbon dioxide fixation, as well as the oxidative fragmentation of the pentose substrate. Both reactions occur simultaneously and in competition at the same active site. The sequence is that of Ribulose bisphosphate carboxylase from Rhodopseudomonas palustris (strain ATCC BAA-98 / CGA009).